Reading from the N-terminus, the 414-residue chain is uncharacterized protein (414 aa).

The signal sequence occupies residues 1 to 16; sequence MRVILLLAFLISLTEC. Positions 20 to 59 constitute a Myb-like 1 domain; sequence SEDLALYDLVEEVGVNFYEWFDIPRDASSNQVKKAYRKLT. The region spanning 35 to 99 is the J domain; it reads NFYEWFDIPR…ELREKYDNVL (65 aa). Residues 125-145 form a helical membrane-spanning segment; that stretch reads ILVLLFIGTIAHYLMMWAAYF. The disordered stretch occupies residues 211–234; that stretch reads MTPKEVEPEEPTEEELAQQRRQQR. Positions 217–226 are enriched in acidic residues; it reads EPEEPTEEEL. The Myb-like 2 domain maps to 274-320; the sequence is AQKQSGATWTPDELASLVRLSTEKYPAGTPNRWEQMGRVLNRSAEDV. The SANT domain maps to 352-407; it reads KSEDDWSQAEQKAFETALQKYPKGTDERWERISEEIGSKTKKQVMVRFKQLAEMIR.

It is found in the nucleus membrane. This is an uncharacterized protein from Caenorhabditis elegans.